Reading from the N-terminus, the 180-residue chain is Chromatin structure-remodeling complex protein RSC14 (180 aa).

Interacts with STH1, RSC3 and ARP9. Component of the two forms of the RSC complex composed of at least either RSC1 or RSC2, and ARP7, ARP9, LDB7, NPL6, RSC3, RSC30, RSC4, RSC58, RSC6, RSC8, RSC9, SFH1, STH1, HTL1 and probably RTT102. The complexes interact with histone and histone variant components of centromeric chromatin. Component of a fungal-specific module (HTL1-LDB7-NPL6-RSC3-RSC30) within the RSC complex.

It localises to the nucleus. Its function is as follows. Component of the chromatin structure-remodeling complex (RSC), which is involved in transcription regulation and nucleosome positioning. RSC is responsible for the transfer of a histone octamer from a nucleosome core particle to naked DNA. The reaction requires ATP and involves an activated RSC-nucleosome intermediate. Remodeling reaction also involves DNA translocation, DNA twist and conformational change. As a reconfigurer of centromeric and flanking nucleosomes, RSC complex is required both for proper kinetochore function in chromosome segregation and, via a PKC1-dependent signaling pathway, for organization of the cellular cytoskeleton. Together with HTL1, NPL6, RSC3, RSC30 components, defines a fungal-specific module within the RSC complex that plays a role in many cellular functions including the maintenance of cell wall integrity. May be involved in the transfer of mannosylphosphate (MP) groups into N-linked oligosaccharides. The protein is Chromatin structure-remodeling complex protein RSC14 (LDB7) of Saccharomyces cerevisiae (strain ATCC 204508 / S288c) (Baker's yeast).